The sequence spans 55 residues: Large ribosomal subunit protein bL33 (55 aa).

Belongs to the bacterial ribosomal protein bL33 family.

This Granulibacter bethesdensis (strain ATCC BAA-1260 / CGDNIH1) protein is Large ribosomal subunit protein bL33.